The primary structure comprises 381 residues: Queuine tRNA-ribosyltransferase (381 aa).

Asp-96 serves as the catalytic Proton acceptor. Residues 96–100 (DSGGF), Asp-150, Gln-193, and Gly-220 contribute to the substrate site. Positions 251–257 (GVGSPDA) are RNA binding. Asp-270 functions as the Nucleophile in the catalytic mechanism. An RNA binding; important for wobble base 34 recognition region spans residues 275 to 279 (TRIAR). Cys-308, Cys-310, Cys-313, and His-339 together coordinate Zn(2+).

This sequence belongs to the queuine tRNA-ribosyltransferase family. As to quaternary structure, homodimer. Within each dimer, one monomer is responsible for RNA recognition and catalysis, while the other monomer binds to the replacement base PreQ1. Zn(2+) serves as cofactor.

The enzyme catalyses 7-aminomethyl-7-carbaguanine + guanosine(34) in tRNA = 7-aminomethyl-7-carbaguanosine(34) in tRNA + guanine. Its pathway is tRNA modification; tRNA-queuosine biosynthesis. Its function is as follows. Catalyzes the base-exchange of a guanine (G) residue with the queuine precursor 7-aminomethyl-7-deazaguanine (PreQ1) at position 34 (anticodon wobble position) in tRNAs with GU(N) anticodons (tRNA-Asp, -Asn, -His and -Tyr). Catalysis occurs through a double-displacement mechanism. The nucleophile active site attacks the C1' of nucleotide 34 to detach the guanine base from the RNA, forming a covalent enzyme-RNA intermediate. The proton acceptor active site deprotonates the incoming PreQ1, allowing a nucleophilic attack on the C1' of the ribose to form the product. After dissociation, two additional enzymatic reactions on the tRNA convert PreQ1 to queuine (Q), resulting in the hypermodified nucleoside queuosine (7-(((4,5-cis-dihydroxy-2-cyclopenten-1-yl)amino)methyl)-7-deazaguanosine). In Bacillus subtilis (strain 168), this protein is Queuine tRNA-ribosyltransferase.